The sequence spans 523 residues: Nuclear receptor ROR-alpha (523 aa).

Residues 1 to 26 (MESAPAAPDPAASEPGSSGADAAAGS) show a composition bias toward low complexity. The tract at residues 1–63 (MESAPAAPDP…SRGISVTKKT (63 aa)) is disordered. K38 is modified (N6-methyllysine). Residues 48 to 57 (QSYSSTSRGI) show a composition bias toward polar residues. NR C4-type zinc fingers lie at residues 73–93 (CKIC…CEGC) and 109–133 (CPRQ…LQKC). Positions 73–138 (CKICGDKSSG…RLQKCLAVGM (66 aa)) form a DNA-binding region, nuclear receptor. Residues 154-183 (DSLYAEVQKHRMQQQQRDHQQQPGEAEPLT) form a disordered region. T183 bears the Phosphothreonine; by MAPK1 mark. A Glycyl lysine isopeptide (Lys-Gly) (interchain with G-Cter in SUMO) cross-link involves residue K240. The 239-residue stretch at 272–510 (ELEHLAQNIS…LHFPPLYKEL (239 aa)) folds into the NR LBD domain. The short motif at 506–523 (LYKELFTSEFEPAMQIDG) is the AF-2 element.

It belongs to the nuclear hormone receptor family. NR1 subfamily. Monomer. Interacts (via the DNA-binding domain) with HIF1A; the interaction enhances HIF1A transcription under hypoxia through increasing protein stability. Interacts with CEBPB; the interaction disrupts the interaction CEBPB:EP300. Interacts with the coactivators NCOA2, PPARGC1A (via LXXLL motif), EP300 and MED1. Interacts with the corepressor NCOR1. Interacts with MAGED1 and CTNNB1. Interacts with CRY1 and PER2. Interacts (via AF-2 motif) with PROX1. Interacts with NRIP1. Isoform 4 interacts (via AF-2 motif) with isoform 1 of FOXP3 (via LXXLL motif). In terms of processing, phosphorylation by conventional PKCs in neurons inhibits transcriptional activity. Phosphorylated on Thr-183 by MAPK1/ERK1 in vitro. Sumoylated by SENP1 and SENP2. Sumoylation, promoted by PIAS2, PIAS3, PIAS4 but not PIAS1, enhances the transcriptional activity. Desumoylated by SENP1. Post-translationally, ubiquitinated, leading to its degradation by the proteasome. Proteasomal degradation is required for efficient transcriptional activity and is prevented by HR. In terms of processing, monomethylated at Lys-38 by EZH2, this creates a degron recognized by a DCX (DDB1-DCAF1/VPRBP-CUL4A-RBX1) E3 ubiquitin ligase complex. As to expression, widely expressed in a number of tissues. Expressed in both regulatory T-cells (Treg) and effector T-cells (Teff). Isoform 4: Highly expressed in the central nervous system, including in the cerebellum.

The protein localises to the nucleus. In terms of biological role, nuclear receptor that binds DNA as a monomer to ROR response elements (RORE) containing a single core motif half-site 5'-AGGTCA-3' preceded by a short A-T-rich sequence. Key regulator of embryonic development, cellular differentiation, immunity, circadian rhythm as well as lipid, steroid, xenobiotics and glucose metabolism. Considered to have intrinsic transcriptional activity, have some natural ligands like oxysterols that act as agonists (25-hydroxycholesterol) or inverse agonists (7-oxygenated sterols), enhancing or repressing the transcriptional activity, respectively. Recruits distinct combinations of cofactors to target genes regulatory regions to modulate their transcriptional expression, depending on the tissue, time and promoter contexts. Regulates genes involved in photoreceptor development including OPN1SW, OPN1SM and ARR3 and skeletal muscle development with MYOD1. Required for proper cerebellum development. Regulates SHH gene expression, among others, to induce granule cells proliferation as well as expression of genes involved in calcium-mediated signal transduction. Regulates the circadian expression of several clock genes, including CLOCK, BMAL1, NPAS2 and CRY1. Competes with NR1D1 for binding to their shared DNA response element on some clock genes such as BMAL1, CRY1 and NR1D1 itself, resulting in NR1D1-mediated repression or RORA-mediated activation of clock genes expression, leading to the circadian pattern of clock genes expression. Therefore influences the period length and stability of the clock. Regulates genes involved in lipid metabolism such as apolipoproteins APOA1, APOA5, APOC3 and PPARG. In liver, has specific and redundant functions with RORC as positive or negative modulator of expression of genes encoding phase I and phase II proteins involved in the metabolism of lipids, steroids and xenobiotics, such as CYP7B1 and SULT2A1. Induces a rhythmic expression of some of these genes. In addition, interplays functionally with NR1H2 and NR1H3 for the regulation of genes involved in cholesterol metabolism. Also involved in the regulation of hepatic glucose metabolism through the modulation of G6PC1 and PCK1. In adipose tissue, plays a role as negative regulator of adipocyte differentiation, probably acting through dual mechanisms. May suppress CEBPB-dependent adipogenesis through direct interaction and PPARG-dependent adipogenesis through competition for DNA-binding. Downstream of IL6 and TGFB and synergistically with RORC isoform 2, is implicated in the lineage specification of uncommitted CD4(+) T-helper (T(H)) cells into T(H)17 cells, antagonizing the T(H)1 program. Probably regulates IL17 and IL17F expression on T(H) by binding to the essential enhancer conserved non-coding sequence 2 (CNS2) in the IL17-IL17F locus. Involved in hypoxia signaling by interacting with and activating the transcriptional activity of HIF1A. May inhibit cell growth in response to cellular stress. May exert an anti-inflammatory role by inducing CHUK expression and inhibiting NF-kappa-B signaling. The protein is Nuclear receptor ROR-alpha (RORA) of Homo sapiens (Human).